The chain runs to 165 residues: Nucleoside-triphosphatase THEP1 (165 aa).

ATP contacts are provided by residues 7-14 and 93-100; these read GRPGVGKT and LVIIDEVG.

This sequence belongs to the THEP1 NTPase family.

The catalysed reaction is a ribonucleoside 5'-triphosphate + H2O = a ribonucleoside 5'-diphosphate + phosphate + H(+). Has nucleotide phosphatase activity towards ATP, GTP, CTP, TTP and UTP. May hydrolyze nucleoside diphosphates with lower efficiency. The protein is Nucleoside-triphosphatase THEP1 of Archaeoglobus fulgidus (strain ATCC 49558 / DSM 4304 / JCM 9628 / NBRC 100126 / VC-16).